A 76-amino-acid polypeptide reads, in one-letter code: Sec-independent protein translocase protein TatA (76 aa).

Residues 1-21 traverse the membrane as a helical segment; sequence MGGISIWQLLIIVAIIVLLFG. Residues 43–76 are disordered; sequence MADDKSQPQDASFEKVEAKEAASTEQKAKEKEQA.

Belongs to the TatA/E family. The Tat system comprises two distinct complexes: a TatABC complex, containing multiple copies of TatA, TatB and TatC subunits, and a separate TatA complex, containing only TatA subunits. Substrates initially bind to the TatABC complex, which probably triggers association of the separate TatA complex to form the active translocon.

It localises to the cell inner membrane. Functionally, part of the twin-arginine translocation (Tat) system that transports large folded proteins containing a characteristic twin-arginine motif in their signal peptide across membranes. TatA could form the protein-conducting channel of the Tat system. This chain is Sec-independent protein translocase protein TatA, found in Actinobacillus pleuropneumoniae serotype 5b (strain L20).